A 332-amino-acid polypeptide reads, in one-letter code: Fructose-1,6-bisphosphatase class 1 (332 aa).

Mg(2+) is bound by residues Glu89, Asp110, Leu112, and Asp113. Substrate-binding positions include 113-116 (DGSS), Asn206, Tyr239, 257-259 (YLY), and Lys269. Residue Glu275 coordinates Mg(2+).

It belongs to the FBPase class 1 family. In terms of assembly, homotetramer. Requires Mg(2+) as cofactor.

It localises to the cytoplasm. It catalyses the reaction beta-D-fructose 1,6-bisphosphate + H2O = beta-D-fructose 6-phosphate + phosphate. It participates in carbohydrate biosynthesis; gluconeogenesis. The chain is Fructose-1,6-bisphosphatase class 1 from Klebsiella pneumoniae (strain 342).